A 230-amino-acid chain; its full sequence is PsbP-like protein 1, chloroplastic (230 aa).

Belongs to the PsbP family.

Its subcellular location is the plastid. It localises to the chloroplast thylakoid lumen. Required for efficient repair of photodamaged PSII, but not tightly associated with the complex. This is PsbP-like protein 1, chloroplastic (PPL1) from Arabidopsis thaliana (Mouse-ear cress).